The primary structure comprises 101 residues: GKVYLVGGPELGGWKLQSDPRAYALWSARQQFKTTDVLWFNFTTGEDSVAEVWREEAYHACDIKDPIRLEPGGPDRFTLLTPGSHFICTKDQKFVACVPGR.

The region spanning 2 to 101 (KVYLVGGPEL…QKFVACVPGR (100 aa)) is the Phytocyanin domain. Asn-41 carries N-linked (GlcNAc...) asparagine glycosylation. Residues Cys-61 and Cys-88 are joined by a disulfide bond. Ser-84 is a glycosylation site (O-linked (Hex) serine). At Cys-97 the chain carries Cysteine derivative. Position 101 is a blocked carboxyl end (Arg) (Arg-101).

The identity of the saccharide is not reported. The sugar attached to Ser-84 is represented simply as Hex. In terms of processing, cys-97 sulfhydryl group is modified but does not form an interchain disulfide bond.

In Ambrosia artemisiifolia var. elatior (Short ragweed), this protein is Pollen allergen Amb a 3.